Here is a 291-residue protein sequence, read N- to C-terminus: Taste receptor type 2 member 16 (291 aa).

Position 1 (methionine 1) is a topological domain, extracellular. A helical transmembrane segment spans residues 2–22; the sequence is IPIQLTVFFMIIYVLESLTII. The Cytoplasmic segment spans residues 23–41; it reads VQSSLIVAVLGREWLQVRR. A helical transmembrane segment spans residues 42–62; that stretch reads LMPVDMILISLGISRFCLQWA. The Extracellular portion of the chain corresponds to 63 to 84; sequence SMLNNFCSYLNLNYVLCNLTIT. Asparagine 80 is a glycosylation site (N-linked (GlcNAc...) asparagine). Residues 85-105 traverse the membrane as a helical segment; that stretch reads WEFFNILTFWLNSLLTVFYCI. Residues 106 to 125 are Cytoplasmic-facing; that stretch reads KVSSFTHHIFLWVRWRILRW. Residues 126–146 traverse the membrane as a helical segment; the sequence is FPWILLGSLTIACVTIIPSAI. Residues 147–182 lie on the Extracellular side of the membrane; it reads GNYIQIQLLTMEHLPRNSTVTDRLEKFHQYQFQSHT. Asparagine 163 carries N-linked (GlcNAc...) asparagine glycosylation. Residues 183 to 203 form a helical membrane-spanning segment; the sequence is VALVIPFILFLASTILLMASL. Topologically, residues 204 to 228 are cytoplasmic; sequence TKQIQHHSTGHCNPSMKAHFTALRS. A helical membrane pass occupies residues 229 to 249; the sequence is LAILFIVFTSYFLIILITIIG. Topologically, residues 250–257 are extracellular; it reads TLFDKRCW. Residues 258–278 form a helical membrane-spanning segment; that stretch reads LWVWEAFVYAFILMHSTSLML. The Cytoplasmic portion of the chain corresponds to 279-291; sequence SSPTLKRILKGKC.

This sequence belongs to the G-protein coupled receptor T2R family. As to quaternary structure, interacts with RTP3 and RTP4.

The protein localises to the cell membrane. Receptor that may play a role in the perception of bitterness and is gustducin-linked. May function as a bitter taste receptor for the phytonutrient beta glucopyranosides, some of which are toxic and some of which lower the risk of cancer and cardiovascular disease. The activity of this receptor may stimulate alpha gustducin, mediate PLC-beta-2 activation and lead to the gating of TRPM5. In Pongo pygmaeus (Bornean orangutan), this protein is Taste receptor type 2 member 16 (TAS2R16).